Consider the following 590-residue polypeptide: uncharacterized protein (590 aa).

Disordered stretches follow at residues 306–329 (IAEP…GIPY) and 528–590 (QPAP…LMNL). A compositionally biased stretch (pro residues) spans 543–563 (PSLPQPVPEPLAPQEPPPPGT).

This is an uncharacterized protein from Ictaluridae (bullhead catfishes).